A 312-amino-acid chain; its full sequence is Retinol dehydrogenase 8 (312 aa).

9–18 (LISGCSSGIG) serves as a coordination point for NADP(+). 3 helical membrane passes run 87 to 107 (VLVN…SLAA), 138 to 158 (IVVV…VYAA), and 170 to 190 (LAVQ…GPVV). Ser143 is a binding site for substrate. Residue Tyr156 is the Proton acceptor of the active site.

Belongs to the short-chain dehydrogenases/reductases (SDR) family. As to expression, detected in photoreceptor outer segments in the retina (at protein level).

Its subcellular location is the membrane. It carries out the reaction all-trans-retinol + NADP(+) = all-trans-retinal + NADPH + H(+). Retinol dehydrogenase with a clear preference for NADP. Converts all-trans-retinal to all-trans-retinol. May play a role in the regeneration of visual pigment at high light intensity. The chain is Retinol dehydrogenase 8 (RDH8) from Bos taurus (Bovine).